Reading from the N-terminus, the 101-residue chain is NADH-quinone oxidoreductase subunit K (101 aa).

3 helical membrane passes run 4 to 24 (LGYFLIIGAILFGLGFAGIII), 30 to 50 (IVLLMCIELMLLAVNTNFIAF), and 61 to 81 (IFVFFILTVAAAESAIGLAIL).

This sequence belongs to the complex I subunit 4L family. NDH-1 is composed of 14 different subunits. Subunits NuoA, H, J, K, L, M, N constitute the membrane sector of the complex.

It localises to the cell inner membrane. It catalyses the reaction a quinone + NADH + 5 H(+)(in) = a quinol + NAD(+) + 4 H(+)(out). NDH-1 shuttles electrons from NADH, via FMN and iron-sulfur (Fe-S) centers, to quinones in the respiratory chain. The immediate electron acceptor for the enzyme in this species is believed to be ubiquinone. Couples the redox reaction to proton translocation (for every two electrons transferred, four hydrogen ions are translocated across the cytoplasmic membrane), and thus conserves the redox energy in a proton gradient. This Coxiella burnetii (strain CbuG_Q212) (Coxiella burnetii (strain Q212)) protein is NADH-quinone oxidoreductase subunit K.